The following is a 437-amino-acid chain: NADH-ubiquinone oxidoreductase chain 4 (437 aa).

13 helical membrane-spanning segments follow: residues 8-28 (GASI…AFII), 50-70 (LTPI…LVLI), 78-98 (YKYI…FCVC), 100-120 (FLTF…LILL), 132-152 (FYLM…LLYL), 177-197 (LVGL…HLWL), 212-232 (LAGV…NFII), 239-259 (VISV…IICI), 266-286 (ALVA…ILMM), 297-317 (TMIA…LSYL), 324-344 (LMFM…WFLF), 361-381 (LLII…MCII), and 417-437 (HVLT…LFSV).

This sequence belongs to the complex I subunit 4 family.

It is found in the mitochondrion membrane. The enzyme catalyses a ubiquinone + NADH + 5 H(+)(in) = a ubiquinol + NAD(+) + 4 H(+)(out). Functionally, core subunit of the mitochondrial membrane respiratory chain NADH dehydrogenase (Complex I) that is believed to belong to the minimal assembly required for catalysis. Complex I functions in the transfer of electrons from NADH to the respiratory chain. The immediate electron acceptor for the enzyme is believed to be ubiquinone. This Albinaria caerulea (Land snail) protein is NADH-ubiquinone oxidoreductase chain 4 (ND4).